A 328-amino-acid polypeptide reads, in one-letter code: Cytochrome c biogenesis protein CcsA (328 aa).

The next 8 helical transmembrane spans lie at 13–33, 46–66, 73–93, 101–121, 146–166, 234–254, 263–283, and 295–315; these read ISFS…LVNL, GIII…IYSG, LYES…VSYF, LNAI…SGLL, MILG…LLVI, IISL…VWAN, WDPK…YLHI, and AIVA…VNLL.

This sequence belongs to the CcmF/CycK/Ccl1/NrfE/CcsA family. May interact with Ccs1.

The protein localises to the plastid. It is found in the chloroplast thylakoid membrane. Its function is as follows. Required during biogenesis of c-type cytochromes (cytochrome c6 and cytochrome f) at the step of heme attachment. This chain is Cytochrome c biogenesis protein CcsA, found in Capsella bursa-pastoris (Shepherd's purse).